A 147-amino-acid chain; its full sequence is UPF0178 protein Patl_1318 (147 aa).

The protein belongs to the UPF0178 family.

In Pseudoalteromonas atlantica (strain T6c / ATCC BAA-1087), this protein is UPF0178 protein Patl_1318.